The chain runs to 462 residues: Peroxisomal membrane protein PEX31 (462 aa).

Over residues 1-19 the composition is skewed to polar residues; the sequence is MSEINNENLEPTSSTVAES. Residues 1-26 form a disordered region; that stretch reads MSEINNENLEPTSSTVAESTESKNKH. The Cytoplasmic segment spans residues 1–90; it reads MSEINNENLE…LSIITWSNDN (90 aa). The chain crosses the membrane as a helical span at residues 91-111; sequence VSANLLGIFLFTVCVLYFGFI. At 112–175 the chain is on the peroxisomal side; sequence TRYFGHLMIV…TILSAQDVRR (64 aa). A helical membrane pass occupies residues 176–196; the sequence is LLFTIAFLSPVYIFLTVFVLS. Residues 197-462 are Cytoplasmic-facing; it reads PNYLMLIGGL…ISDVSMSPSL (266 aa). The segment at 406 to 425 is disordered; sequence PTVEKATPNSHALKSEENNR. Serine 432 is modified (phosphoserine). Threonine 435 is modified (phosphothreonine).

Belongs to the PEX28-32 family. PEX30/31 subfamily.

The protein resides in the peroxisome membrane. The chain is Peroxisomal membrane protein PEX31 (PEX31) from Saccharomyces cerevisiae (strain ATCC 204508 / S288c) (Baker's yeast).